We begin with the raw amino-acid sequence, 580 residues long: Frizzled-10-B (580 aa).

An N-terminal signal peptide occupies residues M1–G20. Over I21–K224 the chain is Extracellular. Residues S29 to A150 enclose the FZ domain. 5 disulfide bridges follow: C34–C95, C42–C88, C79–C117, C106–C147, and C110–C134. N48 carries N-linked (GlcNAc...) asparagine glycosylation. N153 carries N-linked (GlcNAc...) asparagine glycosylation. Residues R173–S194 are disordered. The span at M180 to S189 shows a compositional bias: basic and acidic residues. A helical transmembrane segment spans residues F225–V245. The Cytoplasmic portion of the chain corresponds to L246–P261. A helical transmembrane segment spans residues I262 to A282. At G283–T309 the chain is on the extracellular side. Residues I310–T330 traverse the membrane as a helical segment. Topologically, residues L331 to S350 are cytoplasmic. A helical transmembrane segment spans residues S351–M371. The Extracellular portion of the chain corresponds to R372–A392. The chain crosses the membrane as a helical span at residues L393 to L413. Residues S414 to R442 lie on the Cytoplasmic side of the membrane. A helical membrane pass occupies residues I443–Y463. Over E464 to E501 the chain is Extracellular. The helical transmembrane segment at I502–W522 threads the bilayer. The Cytoplasmic portion of the chain corresponds to T523–V580. Residues K525–W530 carry the Lys-Thr-X-X-X-Trp motif, mediates interaction with the PDZ domain of Dvl family members motif. The interval K558–V580 is disordered. The short motif at T578–V580 is the PDZ-binding element.

Belongs to the G-protein coupled receptor Fz/Smo family. As to expression, expressed in liver, lung, brain, testis, heart and ovary.

It localises to the cell membrane. Functionally, receptor for Wnt proteins. Most of frizzled receptors are coupled to the beta-catenin canonical signaling pathway, which leads to the activation of disheveled proteins, inhibition of GSK-3 kinase, nuclear accumulation of beta-catenin and activation of Wnt target genes. A second signaling pathway involving PKC and calcium fluxes has been seen for some family members, but it is not yet clear if it represents a distinct pathway or if it can be integrated in the canonical pathway, as PKC seems to be required for Wnt-mediated inactivation of GSK-3 kinase. Both pathways seem to involve interactions with G-proteins. May be involved in transduction and intercellular transmission of polarity information during tissue morphogenesis and/or in differentiated tissues. Activated by Wnt8. Could have an antagonizing activity in the morphogenesis during development. This chain is Frizzled-10-B (fzd10-b), found in Xenopus laevis (African clawed frog).